A 313-amino-acid chain; its full sequence is Catalase-related peroxidase (313 aa).

His-28 is an active-site residue. Tyr-294 serves as a coordination point for heme.

This sequence belongs to the catalase family. In terms of assembly, monomer. Heme serves as cofactor.

Its function is as follows. Has an organic peroxide-dependent peroxidase activity. Exhibits strong peroxidase activity using organic hydroperoxides as cosubstrates, weak peroxidase activity using hydrogen peroxide and negligible catalase activity. May have a role in elimination of reactive oxygen species, in particular by deactivating hydroperoxides. This Mycolicibacterium paratuberculosis (strain ATCC BAA-968 / K-10) (Mycobacterium paratuberculosis) protein is Catalase-related peroxidase.